The sequence spans 798 residues: Integrin beta-1 (798 aa).

The first 20 residues, 1-20, serve as a signal peptide directing secretion; sequence MNLQLIFWIGLISSVCCVFG. The Extracellular portion of the chain corresponds to 21–728; that stretch reads QADEDRCLKA…ETPECPTGPD (708 aa). The PSI domain occupies 26–76; it reads RCLKANAKSCGECIQAGPNCGWCTNSTFLQEGMPTSARCDDLEALKKKGCH. 28 disulfides stabilise this stretch: cysteine 27–cysteine 45, cysteine 35–cysteine 464, cysteine 38–cysteine 64, cysteine 48–cysteine 75, cysteine 207–cysteine 213, cysteine 261–cysteine 301, cysteine 401–cysteine 415, cysteine 435–cysteine 462, cysteine 466–cysteine 486, cysteine 477–cysteine 489, cysteine 491–cysteine 500, cysteine 502–cysteine 533, cysteine 516–cysteine 531, cysteine 525–cysteine 536, cysteine 538–cysteine 553, cysteine 555–cysteine 576, cysteine 560–cysteine 574, cysteine 568–cysteine 579, cysteine 581–cysteine 590, cysteine 592–cysteine 615, cysteine 599–cysteine 613, cysteine 607–cysteine 618, cysteine 620–cysteine 630, cysteine 633–cysteine 636, cysteine 640–cysteine 691, cysteine 646–cysteine 665, cysteine 649–cysteine 661, and cysteine 699–cysteine 723. The segment covering 75–91 has biased composition (basic and acidic residues); that stretch reads CHPNDTENPRGSKDIKK. The segment at 75–105 is disordered; sequence CHPNDTENPRGSKDIKKNKNVTNRSKGTAEK. Residues asparagine 94 and asparagine 97 are each glycosylated (N-linked (GlcNAc...) asparagine). The 239-residue stretch at 140–378 folds into the VWFA domain; that stretch reads DYPIDLYYLM…QLIIDAYNSL (239 aa). Mg(2+) contacts are provided by serine 152 and serine 154. Serine 154, aspartate 157, aspartate 158, and glutamate 189 together coordinate Ca(2+). Positions 207 to 213 are CX3CL1-binding; that stretch reads CTNEQNC. Asparagine 212 carries N-linked (GlcNAc...) asparagine glycosylation. Ca(2+)-binding residues include asparagine 244, aspartate 246, proline 248, and glutamate 249. Glutamate 249 is a binding site for Mg(2+). The N-linked (GlcNAc...) asparagine glycan is linked to asparagine 269. Residues 295–314 are CX3CL1-binding; it reads LPNDGQCHLKNDVYTMSHYY. Alanine 362 contributes to the Ca(2+) binding site. The segment at 383–465 is interaction with TMEM182; the sequence is ILENSKLPEG…IILQFICECE (83 aa). Residues asparagine 406 and asparagine 417 are each glycosylated (N-linked (GlcNAc...) asparagine). I-EGF domains are found at residues 466–501, 502–554, 555–591, and 592–631; these read CQGE…RHCE, CSTD…KFCE, CDNF…SACD, and CSLD…PTCE. A glycan (N-linked (GlcNAc...) asparagine) is linked at asparagine 481. A glycan (N-linked (GlcNAc...) asparagine) is linked at asparagine 520. N-linked (GlcNAc...) asparagine glycosylation is present at asparagine 584. Asparagine 669 is a glycosylation site (N-linked (GlcNAc...) asparagine). Residues 729–749 form a helical membrane-spanning segment; the sequence is IIPIVAGVVAGIVLIGLALLL. At 750–798 the chain is on the cytoplasmic side; it reads IWKLLMIIHDRREFAKFEKERMNAKWDTGENPIYKSAVTTVVNPKYEGK. The segment at 762–767 is signal for sorting from recycling endosomes; interaction with ACAP1; that stretch reads EFAKFE. Threonine 777 carries the post-translational modification Phosphothreonine. A Phosphotyrosine modification is found at tyrosine 783. A Phosphoserine modification is found at serine 785. Residues 785–792 form an interaction with ITGB1BP1 region; that stretch reads SAVTTVVN. Phosphothreonine is present on threonine 789. Lysine 794 is subject to N6-acetyllysine; alternate. A Glycyl lysine isopeptide (Lys-Gly) (interchain with G-Cter in SUMO1); alternate cross-link involves residue lysine 794.

The protein belongs to the integrin beta chain family. As to quaternary structure, interacts with seprase FAP (seprase); the interaction occurs at the cell surface of invadopodia membrane in a collagen-dependent manner. Heterodimer of an alpha and a beta subunit. Beta-1 associates with either alpha-1, alpha-2, alpha-3, alpha-4, alpha-5, alpha-6, alpha-7, alpha-8, alpha-9, alpha-10, alpha-11 or alpha-V. ITGA6:ITGB1 is found in a complex with CD9; interaction takes place in oocytes and is involved in sperm-egg fusion. Binds LGALS3BP and NMRK2, when associated with alpha-7, but not with alpha-5. Interacts with FLNA, FLNB, FLNC and RANBP9. Interacts with KRT1 in the presence of RACK1 and SRC. Interacts with JAML; integrin alpha-4/beta-1 may regulate leukocyte to endothelial cells adhesion by controlling JAML homodimerization. Interacts with RAB21. Interacts (via the cytoplasmic region) with RAB25 (via the hypervariable C-terminal region). Interacts with MYO10. Interacts with ITGB1BP1 (via C-terminal region); the interaction is a prerequisite for focal adhesion disassembly. Interacts with TLN1; the interaction is prevented by competitive binding of ITGB1BP1. Interacts with ACAP1; required for ITGB1 recycling. Interacts with ASAP3. Interacts with FERMT2; the interaction is inhibited in presence of ITGB1BP1. Interacts with DAB2. Interacts with FGR and HCK. Interacts with alpha-7A and alpha-7B in adult skeletal muscle. Interacts with alpha-7B in cardiomyocytes of adult heart. Interacts with EMP2; the interaction may be direct or indirect and ITGB1 has a heterodimer form. ITGA5:ITGB1 interacts with CCN3. ITGA4:ITGB1 is found in a ternary complex with CX3CR1 and CX3CL1. ITGA5:ITGB1 interacts with FBN1. ITGA5:ITGB1 acts as a receptor for fibronectin FN1 and mediates R-G-D-dependent cell adhesion to FN1. ITGA5:ITGB1 interacts with IL1B. Interacts with MDK. ITGA4:ITGB1 interacts with MDK; this interaction mediates MDK-induced osteoblast cells migration through PXN phosphorylation. ITGA6:ITGB1 interacts with MDK; this interaction mediates MDK-induced neurite-outgrowth. ITGA5:ITGB1 interacts with ACE2. Interacts with TMEM182 and LAMB1. Interacts with tensin TNS3; TNS3 also interacts with PEAK1, thus acting as an adapter molecule to bridge the association of PEAK1 with ITGB1. Interacts with tensin TNS4; the interaction displaces tensin TNS3 from the ITGB1 cytoplasmic tail and promotes ITGB1 stability. Integrin ITGA9:ITGB1 interacts with SPP1/OPN (via N-terminus). Integrin ITGA9:ITGB1 interacts with TNC/TNFN3 (via the 3rd Fibronectin type-III domain). Integrins ITGA4:ITGB1 and ITGA9:ITGB1 interact with SVEP1 (via Sushi domain 21); thereby inhibit Ca(2+) intracellular signaling and as a result repress vasocontraction. ITGA4:ITGB1 and ITGA5:ITGB1 interacts with SELP. Interacts with CD248. ITGA5:ITGB1 interacts with IGFBP1. ITGA4:ITGB1 interacts with BCAM. Interacts with ADGRG6.

The protein localises to the cell membrane. It is found in the cell projection. Its subcellular location is the invadopodium membrane. The protein resides in the ruffle membrane. It localises to the recycling endosome. The protein localises to the melanosome. It is found in the cell junction. Its subcellular location is the focal adhesion. The protein resides in the lamellipodium. It localises to the ruffle. Integrins alpha-1/beta-1, alpha-2/beta-1, alpha-10/beta-1 and alpha-11/beta-1 are receptors for collagen. Integrins alpha-1/beta-1 and alpha-2/beta-2 recognize the proline-hydroxylated sequence G-F-P-G-E-R in collagen. Integrins alpha-2/beta-1, alpha-3/beta-1, alpha-4/beta-1, alpha-5/beta-1, alpha-8/beta-1, alpha-10/beta-1, alpha-11/beta-1 and alpha-V/beta-1 are receptors for fibronectin. Alpha-4/beta-1 recognizes one or more domains within the alternatively spliced CS-1 and CS-5 regions of fibronectin. Integrin alpha-5/beta-1 is a receptor for fibrinogen. Integrin alpha-1/beta-1, alpha-2/beta-1, alpha-6/beta-1 and alpha-7/beta-1 are receptors for lamimin. Integrin alpha-6/beta-1 (ITGA6:ITGB1) is present in oocytes and is involved in sperm-egg fusion. Integrin alpha-4/beta-1 is a receptor for VCAM1 and recognizes the sequence Q-I-D-S in VCAM1. Integrin alpha-9/beta-1 is a receptor for VCAM1, cytotactin and osteopontin. It recognizes the sequence A-E-I-D-G-I-E-L in cytotactin. Integrin alpha-3/beta-1 is a receptor for epiligrin, thrombospondin and CSPG4. Integrin alpha-3/beta-1 provides a docking site for FAP (seprase) at invadopodia plasma membranes in a collagen-dependent manner and hence may participate in the adhesion, formation of invadopodia and matrix degradation processes, promoting cell invasion. Alpha-3/beta-1 may mediate with LGALS3 the stimulation by CSPG4 of endothelial cells migration. Integrin alpha-V/beta-1 is a receptor for vitronectin. Beta-1 integrins recognize the sequence R-G-D in a wide array of ligands. When associated with alpha-7/beta-1 integrin, regulates cell adhesion and laminin matrix deposition. Involved in promoting endothelial cell motility and angiogenesis. Involved in osteoblast compaction through the fibronectin fibrillogenesis cell-mediated matrix assembly process and the formation of mineralized bone nodules. May be involved in up-regulation of the activity of kinases such as PKC via binding to KRT1. Together with KRT1 and RACK1, serves as a platform for SRC activation or inactivation. Plays a mechanistic adhesive role during telophase, required for the successful completion of cytokinesis. ITGA4:ITGB1 binds to fractalkine (CX3CL1) and may act as its coreceptor in CX3CR1-dependent fractalkine signaling. ITGA4:ITGB1 and ITGA5:ITGB1 bind to PLA2G2A via a site (site 2) which is distinct from the classical ligand-binding site (site 1) and this induces integrin conformational changes and enhanced ligand binding to site 1. ITGA5:ITGB1 acts as a receptor for fibrillin-1 (FBN1) and mediates R-G-D-dependent cell adhesion to FBN1. ITGA5:ITGB1 is a receptor for IL1B and binding is essential for IL1B signaling. ITGA5:ITGB3 is a receptor for soluble CD40LG and is required for CD40/CD40LG signaling. Plays an important role in myoblast differentiation and fusion during skeletal myogenesis. ITGA9:ITGB1 may play a crucial role in SVEP1/polydom-mediated myoblast cell adhesion. Integrins ITGA9:ITGB1 and ITGA4:ITGB1 repress PRKCA-mediated L-type voltage-gated channel Ca(2+) influx and ROCK-mediated calcium sensitivity in vascular smooth muscle cells via their interaction with SVEP1, thereby inhibit vasocontraction. The protein is Integrin beta-1 of Camelus bactrianus (Bactrian camel).